Reading from the N-terminus, the 64-residue chain is Large ribosomal subunit protein bL35 (64 aa).

2 disordered regions span residues 1–22 (MPKA…TGKI) and 34–64 (EHKP…LLNG). The segment covering 34 to 46 (EHKPTTRTRRLEG) has biased composition (basic and acidic residues). Polar residues predominate over residues 50–64 (VSANDTKRVNSLLNG).

The protein belongs to the bacterial ribosomal protein bL35 family.

This Mycolicibacterium paratuberculosis (strain ATCC BAA-968 / K-10) (Mycobacterium paratuberculosis) protein is Large ribosomal subunit protein bL35.